The sequence spans 651 residues: Probable potassium transport system protein Kup (651 aa).

12 consecutive transmembrane segments (helical) span residues 41–61 (LVLGALGVVYGDIGTSPIYAF), 82–102 (VVSFIFWALTLVVTVKYVLFV), 130–150 (LILGVGICGAALFFGDAVITP), 163–183 (IVAPNLTPFVVPATVVILVTL), 194–214 (VAIVFGPIMALWFVALGASGL), 235–255 (FLTVSPAVAFVTVGAVFLAMT), 276–296 (WLWIVFPCLLLNYFGQAAFIL), 309–329 (MIPSFALWPMVLLATAATVIA), 366–386 (IYIPRVNLLLGLAVVILVLGF), 395–415 (AYGIAVTGNMLVTTVLLYIVM), 426–446 (ALPIILGFLVIDMLFFSANII), and 450–470 (EGGWASIGIATVLVLIMWTWV).

This sequence belongs to the HAK/KUP transporter (TC 2.A.72) family.

It localises to the cell inner membrane. The enzyme catalyses K(+)(in) + H(+)(in) = K(+)(out) + H(+)(out). Its function is as follows. Transport of potassium into the cell. Likely operates as a K(+):H(+) symporter. In Brucella ovis (strain ATCC 25840 / 63/290 / NCTC 10512), this protein is Probable potassium transport system protein Kup.